The primary structure comprises 566 residues: OTU domain-containing protein 5 (566 aa).

Disordered regions lie at residues 1–117 and 146–175; these read MTIL…GDAL and PGHS…GAGY. A compositionally biased stretch (pro residues) spans 11–30; sequence PPDADPANEPPPPGPLPPAP. Residues 32–47 show a composition bias toward gly residues; that stretch reads RGGGVGVGGGGTGVGG. A compositionally biased stretch (pro residues) spans 63–75; that stretch reads ASPPPQGPLPGPP. Ser-64 bears the Phosphoserine mark. Residues 84–97 are compositionally biased toward low complexity; the sequence is AVPPGAVAGPRPQQ. A compositionally biased stretch (gly residues) spans 105–115; the sequence is GPGGPGGGPGD. Ser-165 is modified (phosphoserine). Position 175 is a phosphotyrosine (Tyr-175). Ser-177 is modified (phosphoserine). At Thr-195 the chain carries Phosphothreonine. Positions 213-336 constitute an OTU domain; sequence FIIKQMKEDG…NIHYNSVVNP (124 aa). Positions 218–224 are cys-loop; it reads MKEDGAC. Residue Asp-221 is part of the active site. Catalysis depends on Cys-224, which acts as the Nucleophile. The tract at residues 273-283 is variable-loop; the sequence is KRKNNCHGNHI. Phosphoserine is present on Ser-323. The his-loop stretch occupies residues 324–329; sequence YHRNIH. The active site involves His-329. Ser-332 and Ser-370 each carry phosphoserine. Positions 413-497 are disordered; it reads ARQVRGPSQP…PGTSSQFSAG (85 aa). Low complexity-rich tracts occupy residues 425–438 and 445–457; these read ASAT…AASS and SRSP…ASSP. Ser-447 carries the phosphoserine modification. Position 502 is a phosphothreonine (Thr-502). Ser-503 carries the post-translational modification Phosphoserine.

The protein belongs to the peptidase C85 family. As to quaternary structure, interacts with TRAF3. In terms of processing, phosphorylation at Ser-177 is required for deubiquitinating activity. Phosphorylation at Ser-323, Ser-332 and Ser-503 by MTOR promotes its activity.

It is found in the nucleus. The enzyme catalyses Thiol-dependent hydrolysis of ester, thioester, amide, peptide and isopeptide bonds formed by the C-terminal Gly of ubiquitin (a 76-residue protein attached to proteins as an intracellular targeting signal).. Its activity is regulated as follows. Inhibited by N-ethyl-maleimide (NEM). Functionally, deubiquitinating enzyme that functions as a negative regulator of the innate immune system. Has peptidase activity towards 'Lys-48'- and 'Lys-63'-linked polyubiquitin chains. Can also cleave 'Lys-11'-linked ubiquitin chains (in vitro). Acts via TRAF3 deubiquitination and subsequent suppression of type I interferon (IFN) production. Controls neuroectodermal differentiation through cleaving 'Lys-48'-linked ubiquitin chains to counteract degradation of select chromatin regulators such as ARID1A, HDAC2 and HCF1. Acts as a positive regulator of mTORC1 and mTORC2 signaling following phosphorylation by MTOR: acts by mediating deubiquitination of BTRC, leading to its stability. The polypeptide is OTU domain-containing protein 5 (Rattus norvegicus (Rat)).